Reading from the N-terminus, the 1347-residue chain is BTB/POZ domain-containing protein 1 (1347 aa).

2 ANK repeats span residues 51 to 81 and 86 to 115; these read YGRT…DVFV and SGYT…SFRS. 4 RCC1 repeats span residues 148 to 198, 215 to 264, 265 to 322, and 324 to 372; these read GNEL…DKIL, SQNV…ALTK, FGSI…AWTD, and DIYS…CLLQ. BTB domains follow at residues 619-698 and 758-829; these read SDVT…LSPW and MDTV…VELF. Disordered regions lie at residues 1006 to 1029, 1104 to 1139, 1193 to 1237, and 1286 to 1347; these read SSNQ…NVVN, EKAD…SKQV, EGSS…PLSI, and GILK…RAVK. Positions 1013-1023 are enriched in basic and acidic residues; sequence LNKEDAEEKSP. 2 stretches are compositionally biased toward polar residues: residues 1208-1237 and 1297-1306; these read SNGS…PLSI and NRKQGQASKQ. A compositionally biased stretch (basic residues) spans 1336–1347; the sequence is TTHKKGKARAVK.

Interacts with cul3.

Its pathway is protein modification; protein ubiquitination. Probable substrate-specific adapter of an E3 ubiquitin-protein ligase complex which mediates the ubiquitination and subsequent proteasomal degradation of target proteins. The sequence is that of BTB/POZ domain-containing protein 1 (btb1) from Schizosaccharomyces pombe (strain 972 / ATCC 24843) (Fission yeast).